The primary structure comprises 196 residues: dCTP deaminase (196 aa).

DCTP contacts are provided by residues 113–118, aspartate 131, 139–141, tyrosine 174, lysine 181, and glutamine 185; these read RSSLAR and VLE. Glutamate 141 (proton donor/acceptor) is an active-site residue.

Belongs to the dCTP deaminase family. As to quaternary structure, homotrimer.

It catalyses the reaction dCTP + H2O + H(+) = dUTP + NH4(+). The protein operates within pyrimidine metabolism; dUMP biosynthesis; dUMP from dCTP (dUTP route): step 1/2. Its function is as follows. Catalyzes the deamination of dCTP to dUTP. This chain is dCTP deaminase, found in Wigglesworthia glossinidia brevipalpis.